The following is a 160-amino-acid chain: ATP synthase subunit b, chloroplastic (160 aa).

The helical transmembrane segment at 12 to 31 threads the bilayer; that stretch reads NVINIAILVVILIRFARQVV.

The protein belongs to the ATPase B chain family. F-type ATPases have 2 components, F(1) - the catalytic core - and F(0) - the membrane proton channel. F(1) has five subunits: alpha(3), beta(3), gamma(1), delta(1), epsilon(1). F(0) has four main subunits: a(1), b(1), b'(1) and c(10-14). The alpha and beta chains form an alternating ring which encloses part of the gamma chain. F(1) is attached to F(0) by a central stalk formed by the gamma and epsilon chains, while a peripheral stalk is formed by the delta, b and b' chains.

The protein resides in the plastid. The protein localises to the chloroplast thylakoid membrane. F(1)F(0) ATP synthase produces ATP from ADP in the presence of a proton or sodium gradient. F-type ATPases consist of two structural domains, F(1) containing the extramembraneous catalytic core and F(0) containing the membrane proton channel, linked together by a central stalk and a peripheral stalk. During catalysis, ATP synthesis in the catalytic domain of F(1) is coupled via a rotary mechanism of the central stalk subunits to proton translocation. Functionally, component of the F(0) channel, it forms part of the peripheral stalk, linking F(1) to F(0). The sequence is that of ATP synthase subunit b, chloroplastic from Cyanidioschyzon merolae (strain NIES-3377 / 10D) (Unicellular red alga).